The following is a 141-amino-acid chain: Large ribosomal subunit protein uL11 (141 aa).

This sequence belongs to the universal ribosomal protein uL11 family. In terms of assembly, part of the ribosomal stalk of the 50S ribosomal subunit. Interacts with L10 and the large rRNA to form the base of the stalk. L10 forms an elongated spine to which L12 dimers bind in a sequential fashion forming a multimeric L10(L12)X complex. One or more lysine residues are methylated.

Forms part of the ribosomal stalk which helps the ribosome interact with GTP-bound translation factors. The polypeptide is Large ribosomal subunit protein uL11 (Clostridium perfringens (strain ATCC 13124 / DSM 756 / JCM 1290 / NCIMB 6125 / NCTC 8237 / Type A)).